A 220-amino-acid polypeptide reads, in one-letter code: Iron-sulfur cluster repair protein YtfE (220 aa).

This sequence belongs to the RIC family. YtfE subfamily. In terms of assembly, homodimer.

The protein localises to the cytoplasm. Its function is as follows. Di-iron-containing protein involved in the repair of iron-sulfur clusters damaged by oxidative and nitrosative stress conditions. The sequence is that of Iron-sulfur cluster repair protein YtfE from Escherichia coli O6:K15:H31 (strain 536 / UPEC).